A 146-amino-acid polypeptide reads, in one-letter code: MNSLSIFFIVVATAAVCLLFIQSYSIYENYGNIKEFNATHAAFEYSKSIGGTPALDRRVQDVNDTISDVKQKWRCVVYPGNGFVSASIFGFQAEVGPNNTRSIRKFNTMRQCIDFTFSDVINIDIYNPCIAPNINNTECQFLKSVL.

The helical; Signal-anchor for type II membrane protein transmembrane segment at 1–21 (MNSLSIFFIVVATAAVCLLFI) threads the bilayer. Residues 22–146 (QSYSIYENYG…TECQFLKSVL (125 aa)) lie on the Virion surface side of the membrane.

This sequence belongs to the orthopoxvirus OPG155 protein family. Part of a stable entry-fusion complex (EFC) which is at least composed of proteins OPG143, OPG147, OPG155, OPG086, OPG094, OPG107, OPG104, and OPG099. Formation of the viral membrane is necessary for the assembly of the complex. Interacts directly with protein OPG107. Contains two intramolecular disulfide bonds. They are created by the viral disulfide bond formation pathway, a poxvirus-specific pathway that operates on the cytoplasmic side of the MV membranes.

It localises to the virion membrane. In terms of biological role, envelope protein required for virus entry into host cell and for cell-cell fusion (syncytium formation). This is Envelope protein OPG155 (OPG155) from Monkeypox virus (strain Zaire-96-I-16) (MPX).